The following is a 228-amino-acid chain: Probable transcriptional regulatory protein SilR (228 aa).

The Response regulatory domain occupies 2 to 116 (KILIVEDDIK…ELLARVRTLL (115 aa)). D51 is subject to 4-aspartylphosphate. Positions 125-225 (ESQLKVADLS…VRGVGYMLEI (101 aa)) form a DNA-binding region, ompR/PhoB-type.

Phosphorylated by SilS.

It is found in the cytoplasm. Its function is as follows. Component of the sil cation-efflux system that confers resistance to silver. Probable member of a two-component regulatory system SilS/SilR. This chain is Probable transcriptional regulatory protein SilR (silR), found in Salmonella typhimurium.